We begin with the raw amino-acid sequence, 221 residues long: Transcription repressor OFP8 (221 aa).

Positions 124–138 (EDEGDKEESEDDDSD) are enriched in acidic residues. A disordered region spans residues 124–147 (EDEGDKEESEDDDSDTLFSSRSFS). Residues 158-217 (VVKKSKDPYEDFRTSMVEMIVERQIFAPAELQQLLQCFLSLNSRQHHKVIVQVFLEIYAT) form the OVATE domain.

As to expression, expressed in roots, rosette and cauline leaves, shoots, stems, flower buds and siliques.

Its subcellular location is the nucleus. Its function is as follows. Transcriptional repressor that regulates multiple aspects of plant growth and development through the regulation of BEL1-LIKE (BLH) and KNOX TALE (KNAT) homeodomain transcription factors. The protein is Transcription repressor OFP8 (OFP8) of Arabidopsis thaliana (Mouse-ear cress).